The sequence spans 182 residues: MGEEQQKPEELNAPTDDAPQEKQQPADLSSETEKAKSKKKQELSEKDQVVKIQAWWRGTLVRRSLLHAALSAWIIQCWWRLILPKIMEKRRQSMLDTFQQEQWAVVRLQSWIRMWRIRRRYCRLLKAVRTIQSHWRGHTCSSRGVIKGQYRISTSQMHLELEVLLGSGPCIVTECIPLPIKQ.

2 stretches are compositionally biased toward basic and acidic residues: residues Met-1–Glu-10 and Glu-31–Leu-43. The tract at residues Met-1–Leu-43 is disordered. IQ domains are found at residues Glu-45–Ile-74 and Glu-101–Thr-130.

In terms of assembly, interacts with calmodulin. Specifically expressed in testes and mature spermatozoa (at protein level).

Its subcellular location is the cytoplasmic vesicle. The protein resides in the secretory vesicle. The protein localises to the acrosome. Its function is as follows. Involved in sperm capacitation and acrosome reaction. In Mus musculus (Mouse), this protein is IQ domain-containing protein F1.